We begin with the raw amino-acid sequence, 367 residues long: Serine/threonine-protein kinase Sgk2 (367 aa).

The segment at 1–26 is disordered; sequence MNSSPAGTPSPQPSRANGNINLGPSA. Residue serine 10 is modified to Phosphoserine. The Protein kinase domain maps to 35-292; that stretch reads FDFLKVIGKG…FLEIKNHVFF (258 aa). Residues 41–49 and lysine 64 contribute to the ATP site; that span reads IGKGNYGKV. Residues 68–78 carry the Nuclear localization signal motif; that stretch reads KKSILKKKEQS. Aspartate 159 functions as the Proton acceptor in the catalytic mechanism. Residue threonine 193 is modified to Phosphothreonine; by PDPK1. Residues 293–367 form the AGC-kinase C-terminal domain; it reads SPINWDDLYH…APEDDDILDC (75 aa). 2 positions are modified to phosphoserine: serine 334 and serine 356. A Phosphotyrosine modification is found at tyrosine 357.

It belongs to the protein kinase superfamily. AGC Ser/Thr protein kinase family. In terms of processing, activated by phosphorylation on Ser-356 by an unknown kinase (may be mTORC2 but not confirmed), transforming it into a substrate for PDPK1 which then phosphorylates it on Thr-193. Highly expressed in liver, kidney and pancreas, and at lower levels in brain.

Its subcellular location is the cytoplasm. The protein localises to the nucleus. It carries out the reaction L-seryl-[protein] + ATP = O-phospho-L-seryl-[protein] + ADP + H(+). It catalyses the reaction L-threonyl-[protein] + ATP = O-phospho-L-threonyl-[protein] + ADP + H(+). Its activity is regulated as follows. Two specific sites, one in the kinase domain (Thr-193) and the other in the C-terminal regulatory region (Ser-356), need to be phosphorylated for its full activation. Its function is as follows. Serine/threonine-protein kinase which is involved in the regulation of a wide variety of ion channels, membrane transporters, cell growth, survival and proliferation. Up-regulates Na(+) channels: SCNN1A/ENAC, K(+) channels: KCNA3/Kv1.3, KCNE1 and KCNQ1, amino acid transporter: SLC6A19, glutamate transporter: SLC1A6/EAAT4, glutamate receptors: GRIA1/GLUR1 and GRIK2/GLUR6, Na(+)/H(+) exchanger: SLC9A3/NHE3, and the Na(+)/K(+) ATPase. The protein is Serine/threonine-protein kinase Sgk2 (SGK2) of Homo sapiens (Human).